Here is a 66-residue protein sequence, read N- to C-terminus: Cold shock protein 1 (66 aa).

The CSD domain maps to 4 to 63; sequence GTVKWFNADKGYGFITGEDGNDVFVHFSAIQTDGFKTLEEGQKVTFDEESSDRGPQAANV. The disordered stretch occupies residues 47-66; sequence VTFDEESSDRGPQAANVVPQ.

The protein localises to the cytoplasm. This chain is Cold shock protein 1 (csp), found in Lactiplantibacillus plantarum (strain ATCC BAA-793 / NCIMB 8826 / WCFS1) (Lactobacillus plantarum).